The primary structure comprises 425 residues: Probable mannosyltransferase KTR2 (425 aa).

The Cytoplasmic portion of the chain corresponds to 1 to 13 (MQICKVFLTQVKK). A helical; Signal-anchor for type II membrane protein membrane pass occupies residues 14–33 (LLFVSLLFCLIAQTCWLALV). The segment at 34–89 (PYQRQLSLDSYFFRRSREVSSRYDFTRRRHMNQTLKLSSNTYNDEPLNKTKGIKNQ) is stem region. At 34–425 (PYQRQLSLDS…SGKYFLKHDS (392 aa)) the chain is on the lumenal side. 4 N-linked (GlcNAc...) asparagine glycosylation sites follow: Asn65, Asn81, Asn92, and Asn167. Positions 90–425 (RENATLLMLV…SGKYFLKHDS (336 aa)) are catalytic. Glu313 (nucleophile) is an active-site residue.

The protein belongs to the glycosyltransferase 15 family.

The protein resides in the golgi apparatus membrane. It functions in the pathway protein modification; protein glycosylation. In terms of biological role, involved in N-linked glycosylation. Transfers an alpha-D-mannosyl residue from GDP-mannose into lipid-linked oligosaccharide, forming an alpha-(1-&gt;2)-D-mannosyl-D-mannose linkage. This is Probable mannosyltransferase KTR2 (KTR2) from Saccharomyces cerevisiae (strain ATCC 204508 / S288c) (Baker's yeast).